Reading from the N-terminus, the 112-residue chain is Large ribosomal subunit protein uL22 (112 aa).

It belongs to the universal ribosomal protein uL22 family. In terms of assembly, part of the 50S ribosomal subunit.

Its function is as follows. This protein binds specifically to 23S rRNA; its binding is stimulated by other ribosomal proteins, e.g. L4, L17, and L20. It is important during the early stages of 50S assembly. It makes multiple contacts with different domains of the 23S rRNA in the assembled 50S subunit and ribosome. In terms of biological role, the globular domain of the protein is located near the polypeptide exit tunnel on the outside of the subunit, while an extended beta-hairpin is found that lines the wall of the exit tunnel in the center of the 70S ribosome. The protein is Large ribosomal subunit protein uL22 of Lawsonia intracellularis (strain PHE/MN1-00).